The sequence spans 309 residues: Palmitoyltransferase ZDHHC19 (309 aa).

2 helical membrane-spanning segments follow: residues 29-49 and 59-79; these read LFAA…FAFP and WAFP…LVSL. The DHHC domain maps to 112–162; that stretch reads QWCPKCCFHRPPRTYHCPWCNICVEDFDHHCKWVNNCIGHRNFRFFMLLVL. The S-palmitoyl cysteine intermediate role is filled by Cys-142. 2 helical membrane-spanning segments follow: residues 160–180 and 193–213; these read LVLS…IFLV and IAIV…LLLL. Pro residues predominate over residues 280–294; sequence LHPPMSPSALNPPAP. The disordered stretch occupies residues 280–309; it reads LHPPMSPSALNPPAPTSGSLQSREGTPGAW.

This sequence belongs to the DHHC palmitoyltransferase family.

The protein localises to the golgi apparatus membrane. It is found in the cytoplasm. The protein resides in the perinuclear region. The enzyme catalyses L-cysteinyl-[protein] + hexadecanoyl-CoA = S-hexadecanoyl-L-cysteinyl-[protein] + CoA. Palmitoyltransferase that mediates palmitoylation oproteins, such as RRAS and SQSTM1. Catalyzes palmitoylation of RRAS, leading to increased cell viability. Acts as a positive regulator of autophagy by mediating palmitoylation of SQSTM1, promoting affinity between SQSTM1 and ATG8 proteins and recruitment of ubiquitinated cargo proteins to autophagosomes. Functionally, (Microbial infection) Promotes Chikungunya virus (CHIKV) replication by mediating viral nsp1 palmitoylation. This chain is Palmitoyltransferase ZDHHC19, found in Homo sapiens (Human).